A 294-amino-acid chain; its full sequence is UDP-3-O-acyl-N-acetylglucosamine deacetylase (294 aa).

H75, H232, and D236 together coordinate Zn(2+). H259 acts as the Proton donor in catalysis.

Belongs to the LpxC family. It depends on Zn(2+) as a cofactor.

The enzyme catalyses a UDP-3-O-[(3R)-3-hydroxyacyl]-N-acetyl-alpha-D-glucosamine + H2O = a UDP-3-O-[(3R)-3-hydroxyacyl]-alpha-D-glucosamine + acetate. Its pathway is glycolipid biosynthesis; lipid IV(A) biosynthesis; lipid IV(A) from (3R)-3-hydroxytetradecanoyl-[acyl-carrier-protein] and UDP-N-acetyl-alpha-D-glucosamine: step 2/6. Functionally, catalyzes the hydrolysis of UDP-3-O-myristoyl-N-acetylglucosamine to form UDP-3-O-myristoylglucosamine and acetate, the committed step in lipid A biosynthesis. The chain is UDP-3-O-acyl-N-acetylglucosamine deacetylase from Sulfurovum sp. (strain NBC37-1).